The following is a 189-amino-acid chain: GTPase NRas (189 aa).

Residue 10–17 coordinates GTP; the sequence is GAGGVGKS. An Effector region motif is present at residues 32–40; the sequence is YDPTIEDSY. GTP-binding positions include 57-61 and 116-119; these read DTAGQ and NKCD. A hypervariable region region spans residues 166 to 185; it reads YRMKKLDSSEDNNQGCIRIP. Cys181 carries the S-palmitoyl cysteine lipid modification. Cys186 is lipidated: S-farnesyl cysteine. The propeptide at 187–189 is removed in mature form; that stretch reads KLM.

The protein belongs to the small GTPase superfamily. Ras family. Palmitoylated by the ZDHHC9-GOLGA7 complex. Depalmitoylated by abhd17a, abhd17b and abhd17c. A continuous cycle of de- and re-palmitoylation regulates rapid exchange between plasma membrane and Golgi.

It is found in the cell membrane. The protein resides in the golgi apparatus membrane. It carries out the reaction GTP + H2O = GDP + phosphate + H(+). Its activity is regulated as follows. Alternates between an inactive form bound to GDP and an active form bound to GTP. Activated by a guanine nucleotide-exchange factor (GEF) and inactivated by a GTPase-activating protein (GAP). Its function is as follows. Ras proteins bind GDP/GTP and possess intrinsic GTPase activity. This is GTPase NRas (nras) from Xenopus laevis (African clawed frog).